The chain runs to 257 residues: Anamorsin homolog (257 aa).

The tract at residues 1–134 (MSDRKNVLFV…KVGSSDKVTL (134 aa)) is N-terminal SAM-like domain. Residues 135–168 (NPEMKENVVSAWKLDDNNSETISEDDLLEADDLI) form a linker region. [2Fe-2S] cluster-binding residues include cysteine 178, cysteine 187, cysteine 190, and cysteine 192. Residues 178-192 (CATTKKAKACKDCSC) are fe-S binding site A. 4 residues coordinate [4Fe-4S] cluster: cysteine 218, cysteine 221, cysteine 229, and cysteine 232. 2 short sequence motifs (cx2C motif) span residues 218–221 (CGSC) and 229–232 (CASC). The segment at 218-232 (CGSCYLGDAFRCASC) is fe-S binding site B.

The protein belongs to the anamorsin family. Monomer. [2Fe-2S] cluster is required as a cofactor. It depends on [4Fe-4S] cluster as a cofactor.

The protein resides in the cytoplasm. It is found in the mitochondrion intermembrane space. Its function is as follows. Component of the cytosolic iron-sulfur (Fe-S) protein assembly (CIA) machinery. Required for the maturation of extramitochondrial Fe-S proteins. Part of an electron transfer chain functioning in an early step of cytosolic Fe-S biogenesis, facilitating the de novo assembly of a [4Fe-4S] cluster on the cytosolic Fe-S scaffold complex. Electrons are transferred from NADPH via a FAD- and FMN-containing diflavin oxidoreductase. Together with the diflavin oxidoreductase, also required for the assembly of the diferric tyrosyl radical cofactor of ribonucleotide reductase (RNR), probably by providing electrons for reduction during radical cofactor maturation in the catalytic small subunit. The chain is Anamorsin homolog from Acyrthosiphon pisum (Pea aphid).